A 122-amino-acid chain; its full sequence is MTRIAGVNVPVKKCIPFGLTYIYGIGISTANIICHACGIDKSKRVSELRDKDIEKINSFIRQNYSIEGDLRKEVAMNIKSLVEMGCYRGVRHRKGLPVRGQRTHTNAKTRKGKSRLPIAGKE.

Basic residues predominate over residues 97 to 114 (PVRGQRTHTNAKTRKGKS). Residues 97–122 (PVRGQRTHTNAKTRKGKSRLPIAGKE) form a disordered region.

It belongs to the universal ribosomal protein uS13 family. Part of the 30S ribosomal subunit. Forms a loose heterodimer with protein S19. Forms two bridges to the 50S subunit in the 70S ribosome.

In terms of biological role, located at the top of the head of the 30S subunit, it contacts several helices of the 16S rRNA. In the 70S ribosome it contacts the 23S rRNA (bridge B1a) and protein L5 of the 50S subunit (bridge B1b), connecting the 2 subunits; these bridges are implicated in subunit movement. Contacts the tRNAs in the A and P-sites. This Wolbachia sp. subsp. Brugia malayi (strain TRS) protein is Small ribosomal subunit protein uS13.